A 1503-amino-acid chain; its full sequence is MSHANRKEITGLTRMTPKGLKELCKKDKLYQTPRLNDVLYLHYQGFQCIENLEEYTELKCLWLECNAISEIQGLEKLGKLKCLFLQNNLITKIENLDPCRELDTLNLSSNHIRKIQNIGTNILPVLNTLTIASNYLKDSDSLSDLIQCKTLSVLDLSNNRIDDILIVKIFEQMVSLKVLVLQGNPVVSRLPQYRKTLILACKELTYLDSRPVFPRDRACAEAWKRDGYEGERKENNRWKRAERRKTRESINCTIRMRNSHRPPDQQDPLLRSSDSEDDTCTETTRKKVALENDCVDDLWEEVSCEQPISDHGTSTSSSVEDKDGTSSQDDLIAEKLSNRGTLEGRPTVLYENEVSNIKSVNQNIKNFEPRSIETKVFQDVSKISPIIIEEKRVPNINLNNEPSDVKNRKVIKCEKTGYTSTGQVLKENVFDEDAEIKNVEDMVQCQDIIKSNEDMNSEFVVSTKLEKDVEQTCIALRNEAQCKELDEDQSIKEIESKLINEMYENVAADDHDKHNETVDLNLKKTASAQHARTFFFEENKMTRRFYQEDKKSSLLAKSKEEALLEEDCIISNEKCAYDLEEIGRQMEEDLAELRQSTQKLVGFSIDEDADSKTDSEIDEEDLMAQQDPYSPLLQQQFKDRRMKIMLKEETKAQGESIRDLNITLSNESSSDDKQDQLFAKLLDDATENIPKRIFGTGCDSLSSAWPQEECLLQLTLSEVKETPDQEIVFKNSITNSSSFEEANEICVRIDQKMAEEEAALGKLLHDLENEANTKVKHDETNSSKESDAARICTSLLDDIMVELTFNEKRWHEKPKSFKFGPIESDDEFSYSFEPQLEKLVPPALEDPARGKSLRECLDTFSDFVSSMADPKLPLMLGRNPTSGVEKIRAAQELLKSKNLAELYADTAESLNSQVAKEIEKRKRRVAASATRCFNQRDKYDDTLELVQNRLMIVKKDSGDLEELPPPPPLISDTESEDYDTAEDEYTPGNGGHKHTHGSKPQDSKEHLMNNLLKQKQDKPDTVEEVGKKNDHDEDEFYSLEAMTTFGNLDAEFFHKLDLQKVNDSEDSESAINCMRSYNELQAYMKSGSLKHQLNSEDTKMLQTMFSTVASDGKPKLRNPKGEEEDDLLKKMVLRMKEYEEREHQLQLVPHEIPRELSPIKLSLGGSKLFEQKNKIPETGLVHAENELTGNIQFIDNKKTNNDKSTDAIEKNCEPLVKTSCQTSNKSIDDDIQSDVSTDYESGEEVLVVEPPKLSDAVLKSLYSDGFEADLKMVHELEEATRRNLYRYHSNVMHNSTNNHSFSTKKTLPTKTSTSEQSVGAKAKWAKIAERLHEFLDPETILRKEQIGERDACEDSEDEDFAFEENNFEKDEKLIISEEYNSTQNICDGNSGPSKLDGSDQFASIKGFENITEMPTYNMELNSQSKKKTSEKLSNEIENIITTCSSFEAPTDSIGIEYFEDPTLTQINPEGLKTEQIECNLQILNEDGDVVVQELSVNAQVSFE.

LRR repeat units lie at residues 34–56 (RLNDVLYLHYQGFQCIENLEEYT), 57–78 (ELKCLWLECNAISEIQGLEKLG), 79–100 (KLKCLFLQNNLITKIENLDPCR), 101–122 (ELDTLNLSSNHIRKIQNIGTNI), 125–146 (VLNTLTIASNYLKDSDSLSDLI), and 150–171 (TLSVLDLSNNRIDDILIVKIFE). The LRRCT domain occupies 185–223 (PVVSRLPQYRKTLILACKELTYLDSRPVFPRDRACAEAW). Disordered regions lie at residues 249–280 (SINCTIRMRNSHRPPDQQDPLLRSSDSEDDTC), 305–328 (EQPISDHGTSTSSSVEDKDGTSSQ), 956–1033 (DSGD…DHDE), and 1295–1315 (STNNHSFSTKKTLPTKTSTSE). Over residues 973–985 (TESEDYDTAEDEY) the composition is skewed to acidic residues. Over residues 1014-1031 (QKQDKPDTVEEVGKKNDH) the composition is skewed to basic and acidic residues. Positions 1303 to 1314 (TKKTLPTKTSTS) are enriched in low complexity.

The protein belongs to the DNAAF1 family.

The protein localises to the cell projection. The protein resides in the cilium. Functionally, cilium-specific protein required for cilia structures. The polypeptide is Dynein axonemal assembly factor 1 homolog (dtr) (Drosophila erecta (Fruit fly)).